The sequence spans 212 residues: Putative 3-methyladenine DNA glycosylase (212 aa).

The protein belongs to the DNA glycosylase MPG family.

In Nocardia farcinica (strain IFM 10152), this protein is Putative 3-methyladenine DNA glycosylase.